The primary structure comprises 398 residues: Argininosuccinate synthase (398 aa).

9–17 serves as a coordination point for ATP; it reads AYSGGLDTS. L-citrulline is bound at residue Y85. G115 provides a ligand contact to ATP. L-aspartate contacts are provided by T117, N121, and D122. N121 lines the L-citrulline pocket. Residues R125, S173, E258, and Y270 each coordinate L-citrulline.

The protein belongs to the argininosuccinate synthase family. Type 1 subfamily. In terms of assembly, homotetramer.

It localises to the cytoplasm. It catalyses the reaction L-citrulline + L-aspartate + ATP = 2-(N(omega)-L-arginino)succinate + AMP + diphosphate + H(+). The protein operates within amino-acid biosynthesis; L-arginine biosynthesis; L-arginine from L-ornithine and carbamoyl phosphate: step 2/3. This Streptococcus pneumoniae (strain Hungary19A-6) protein is Argininosuccinate synthase.